A 165-amino-acid chain; its full sequence is C-phycoerythrin class 2 subunit alpha (165 aa).

The phycourobilin site is built by Cys75, Cys83, and Cys140.

It belongs to the phycobiliprotein family. As to quaternary structure, heterodimer of an alpha and a beta chain. Post-translationally, contains three covalently linked phycourobilin chromophores.

It is found in the cellular thylakoid membrane. Light-harvesting photosynthetic bile pigment-protein from the phycobiliprotein complex. The protein is C-phycoerythrin class 2 subunit alpha (mpeA) of Synechococcus sp. (strain WH8103).